A 102-amino-acid polypeptide reads, in one-letter code: Putative nuclear receptor corepressor 1-like protein NCOR1P1 (102 aa).

A compositionally biased stretch (polar residues) spans 1–18; the sequence is MSSSGYPPNQGAFSTEQS. The segment at 1–68 is disordered; the sequence is MSSSGYPPNQ…DQNASPSKLS (68 aa). The stretch at 68–100 forms a coiled coil; it reads SKEELIECMDRVDREIAKVEQQILKLKKKQVKV.

Belongs to the N-CoR nuclear receptor corepressors family.

The protein is Putative nuclear receptor corepressor 1-like protein NCOR1P1 (NCOR1P1) of Homo sapiens (Human).